Consider the following 215-residue polypeptide: Beta-crystallin A3-2 (215 aa).

The N-terminal arm stretch occupies residues 1-30 (MEIPAIQTEREDITSEKMAQINPLPVPLGP). Beta/gamma crystallin 'Greek key' domains are found at residues 31–70 (WKIT…KVEC) and 71–117 (GAWI…RPIC). A connecting peptide region spans residues 118 to 123 (SANHEE). Beta/gamma crystallin 'Greek key' domains lie at 124-165 (SKLV…KVQC) and 166-214 (GAWV…RRIQ).

The protein belongs to the beta/gamma-crystallin family. Homo/heterodimer, or complexes of higher-order. The structure of beta-crystallin oligomers seems to be stabilized through interactions between the N-terminal arms. Post-translationally, the N-terminus is blocked.

Crystallins are the dominant structural components of the vertebrate eye lens. The protein is Beta-crystallin A3-2 of Aquarana catesbeiana (American bullfrog).